A 305-amino-acid polypeptide reads, in one-letter code: Ribonuclease Z (305 aa).

Residues H63, H65, D67, H68, H142, D209, and H267 each coordinate Zn(2+). Catalysis depends on D67, which acts as the Proton acceptor.

Belongs to the RNase Z family. In terms of assembly, homodimer. Zn(2+) serves as cofactor.

The enzyme catalyses Endonucleolytic cleavage of RNA, removing extra 3' nucleotides from tRNA precursor, generating 3' termini of tRNAs. A 3'-hydroxy group is left at the tRNA terminus and a 5'-phosphoryl group is left at the trailer molecule.. Functionally, zinc phosphodiesterase, which displays some tRNA 3'-processing endonuclease activity. Probably involved in tRNA maturation, by removing a 3'-trailer from precursor tRNA. The chain is Ribonuclease Z from Nocardia farcinica (strain IFM 10152).